The chain runs to 194 residues: ATP-dependent Clp protease proteolytic subunit (194 aa).

Ser-98 acts as the Nucleophile in catalysis. Residue His-123 is part of the active site.

The protein belongs to the peptidase S14 family. As to quaternary structure, fourteen ClpP subunits assemble into 2 heptameric rings which stack back to back to give a disk-like structure with a central cavity, resembling the structure of eukaryotic proteasomes.

It is found in the cytoplasm. The enzyme catalyses Hydrolysis of proteins to small peptides in the presence of ATP and magnesium. alpha-casein is the usual test substrate. In the absence of ATP, only oligopeptides shorter than five residues are hydrolyzed (such as succinyl-Leu-Tyr-|-NHMec, and Leu-Tyr-Leu-|-Tyr-Trp, in which cleavage of the -Tyr-|-Leu- and -Tyr-|-Trp bonds also occurs).. Its function is as follows. Cleaves peptides in various proteins in a process that requires ATP hydrolysis. Has a chymotrypsin-like activity. Plays a major role in the degradation of misfolded proteins. This is ATP-dependent Clp protease proteolytic subunit from Alkaliphilus metalliredigens (strain QYMF).